The primary structure comprises 305 residues: 2-methoxy-6-polyprenyl-1,4-benzoquinol methylase, mitochondrial (305 aa).

A mitochondrion-targeting transit peptide spans 1–34 (MSRLRAPVAKFLADGLKGIRSTALAGSRLSNCRY). S-adenosyl-L-methionine-binding positions include Thr117, Asp143, and 173-174 (NA).

Belongs to the class I-like SAM-binding methyltransferase superfamily. MenG/UbiE family. In terms of assembly, component of a multi-subunit COQ enzyme complex, composed of at least COQ3, COQ4, COQ5, COQ6, COQ7 and COQ9.

The protein localises to the mitochondrion inner membrane. The enzyme catalyses 2-methoxy-6-(all-trans-decaprenyl)benzene-1,4-diol + S-adenosyl-L-methionine = 5-methoxy-2-methyl-3-(all-trans-decaprenyl)benzene-1,4-diol + S-adenosyl-L-homocysteine + H(+). It participates in cofactor biosynthesis; ubiquinone biosynthesis. Functionally, methyltransferase required for the conversion of 2-decaprenyl-6-methoxy-1,4-benzoquinol (DDMQH2) to 2-decaprenyl-3-methyl-6-methoxy-1,4-benzoquinol (DMQH2). This is 2-methoxy-6-polyprenyl-1,4-benzoquinol methylase, mitochondrial from Schizosaccharomyces pombe (strain 972 / ATCC 24843) (Fission yeast).